Reading from the N-terminus, the 424-residue chain is Histidine--tRNA ligase (424 aa).

The protein belongs to the class-II aminoacyl-tRNA synthetase family. As to quaternary structure, homodimer.

It is found in the cytoplasm. The catalysed reaction is tRNA(His) + L-histidine + ATP = L-histidyl-tRNA(His) + AMP + diphosphate + H(+). In Escherichia coli (strain 55989 / EAEC), this protein is Histidine--tRNA ligase.